Consider the following 264-residue polypeptide: Tetraspanin-12 (264 aa).

Residues 1-13 (MLRLSNAAVITTN) are Cytoplasmic-facing. A helical membrane pass occupies residues 14–34 (AILALIGLAALSFSVYVYVQG). The Extracellular segment spans residues 35–45 (PSQCQRFVQNP). The helical transmembrane segment at 46–66 (LIVTAALLFFISSLGLIAALY) threads the bilayer. At 67-75 (GSHIIITLY) the chain is on the cytoplasmic side. The chain crosses the membrane as a helical span at residues 76–96 (LFFLFLSILLLLVLSVFIFLV). The Extracellular portion of the chain corresponds to 97–228 (TNPTAGKALS…VLKGIRKRWR (132 aa)). An N-linked (GlcNAc...) asparagine glycan is attached at asparagine 180. A helical membrane pass occupies residues 229 to 249 (ILIVVNLLLILLVVFLYSCGC). At 250–264 (CVRKNNRVPWKRRFF) the chain is on the cytoplasmic side.

Belongs to the tetraspanin (TM4SF) family.

It is found in the membrane. May be involved in the regulation of cell differentiation. The chain is Tetraspanin-12 (TET12) from Arabidopsis thaliana (Mouse-ear cress).